We begin with the raw amino-acid sequence, 360 residues long: Membrane-bound lytic murein transglycosylase C (360 aa).

The first 16 residues, 1–16 (MKKIFALALIAPLLIS), serve as a signal peptide directing secretion. A lipid anchor (N-palmitoyl cysteine) is attached at Cys-17. Cys-17 carries the S-diacylglycerol cysteine lipid modification.

Belongs to the transglycosylase Slt family.

The protein localises to the cell outer membrane. It carries out the reaction Exolytic cleavage of the (1-&gt;4)-beta-glycosidic linkage between N-acetylmuramic acid (MurNAc) and N-acetylglucosamine (GlcNAc) residues in peptidoglycan, from either the reducing or the non-reducing ends of the peptidoglycan chains, with concomitant formation of a 1,6-anhydrobond in the MurNAc residue.. In terms of biological role, murein-degrading enzyme. May play a role in recycling of muropeptides during cell elongation and/or cell division. The polypeptide is Membrane-bound lytic murein transglycosylase C (Cronobacter sakazakii (strain ATCC BAA-894) (Enterobacter sakazakii)).